Reading from the N-terminus, the 485-residue chain is Probable glycine dehydrogenase (decarboxylating) subunit 2 (485 aa).

K273 bears the N6-(pyridoxal phosphate)lysine mark.

The protein belongs to the GcvP family. C-terminal subunit subfamily. The glycine cleavage system is composed of four proteins: P, T, L and H. In this organism, the P 'protein' is a heterodimer of two subunits. The cofactor is pyridoxal 5'-phosphate.

It carries out the reaction N(6)-[(R)-lipoyl]-L-lysyl-[glycine-cleavage complex H protein] + glycine + H(+) = N(6)-[(R)-S(8)-aminomethyldihydrolipoyl]-L-lysyl-[glycine-cleavage complex H protein] + CO2. Its function is as follows. The glycine cleavage system catalyzes the degradation of glycine. The P protein binds the alpha-amino group of glycine through its pyridoxal phosphate cofactor; CO(2) is released and the remaining methylamine moiety is then transferred to the lipoamide cofactor of the H protein. This is Probable glycine dehydrogenase (decarboxylating) subunit 2 from Oceanobacillus iheyensis (strain DSM 14371 / CIP 107618 / JCM 11309 / KCTC 3954 / HTE831).